Reading from the N-terminus, the 264-residue chain is Thymidylate synthase (264 aa).

DUMP is bound at residue Arg-21. Residue His-51 coordinates (6R)-5,10-methylene-5,6,7,8-tetrahydrofolate. Residue 126 to 127 (RR) coordinates dUMP. Cys-146 functions as the Nucleophile in the catalytic mechanism. Residues 166–169 (RSAD), Asn-177, and 207–209 (HLY) each bind dUMP. Asp-169 provides a ligand contact to (6R)-5,10-methylene-5,6,7,8-tetrahydrofolate. Ala-263 is a (6R)-5,10-methylene-5,6,7,8-tetrahydrofolate binding site.

Belongs to the thymidylate synthase family. Bacterial-type ThyA subfamily. As to quaternary structure, homodimer.

It is found in the cytoplasm. It carries out the reaction dUMP + (6R)-5,10-methylene-5,6,7,8-tetrahydrofolate = 7,8-dihydrofolate + dTMP. Its pathway is pyrimidine metabolism; dTTP biosynthesis. Its function is as follows. Catalyzes the reductive methylation of 2'-deoxyuridine-5'-monophosphate (dUMP) to 2'-deoxythymidine-5'-monophosphate (dTMP) while utilizing 5,10-methylenetetrahydrofolate (mTHF) as the methyl donor and reductant in the reaction, yielding dihydrofolate (DHF) as a by-product. This enzymatic reaction provides an intracellular de novo source of dTMP, an essential precursor for DNA biosynthesis. The polypeptide is Thymidylate synthase (Rhizobium etli (strain ATCC 51251 / DSM 11541 / JCM 21823 / NBRC 15573 / CFN 42)).